The chain runs to 726 residues: Long-chain-fatty-acid--CoA ligase ACSBG1 (726 aa).

Residues 1-39 (MPDSRAAPQESLLDASLGTTQENVGTSSLTDGQTLSKEP) form a disordered region. Residues 17–36 (LGTTQENVGTSSLTDGQTLS) show a composition bias toward polar residues. Ser-36 carries the post-translational modification Phosphoserine. Residue Tyr-641 is modified to Phosphotyrosine. The interval 707-726 (SKQGSSLPGFSLRWQTGASS) is disordered.

Belongs to the ATP-dependent AMP-binding enzyme family. Bubblegum subfamily.

The protein resides in the cytoplasm. Its subcellular location is the cytoplasmic vesicle. It localises to the microsome. It is found in the endoplasmic reticulum. The protein localises to the cell membrane. It catalyses the reaction a long-chain fatty acid + ATP + CoA = a long-chain fatty acyl-CoA + AMP + diphosphate. It carries out the reaction (E)-hexadec-2-enoate + ATP + CoA = (2E)-hexadecenoyl-CoA + AMP + diphosphate. The enzyme catalyses hexadecanoate + ATP + CoA = hexadecanoyl-CoA + AMP + diphosphate. Functionally, catalyzes the conversion of fatty acids such as long-chain and very long-chain fatty acids to their active form acyl-CoAs for both synthesis of cellular lipids, and degradation via beta-oxidation. Can activate diverse saturated, monosaturated and polyunsaturated fatty acids. The protein is Long-chain-fatty-acid--CoA ligase ACSBG1 of Bos taurus (Bovine).